The primary structure comprises 195 residues: Meiotically up-regulated gene 84 protein (195 aa).

Topologically, residues 1-84 (MTLTHHSTFI…IMVKVPTYEY (84 aa)) are cytoplasmic. The helical transmembrane segment at 85 to 105 (YGFVMYLVSMLGFGVYIVWAL) threads the bilayer. Topologically, residues 106–122 (TPAPVLKFFEIHYYLSR) are lumenal. Residues 123-143 (WWALAIPTWLFVLVIYIHVVL) form a helical membrane-spanning segment. Residues 144-195 (NAYNTEVLTKPFSSLECIVDQYALVGEEDGAAHGRVVDLRLCDVNKQQLEET) lie on the Cytoplasmic side of the membrane.

Its subcellular location is the endoplasmic reticulum membrane. Has a role in meiosis. This is Meiotically up-regulated gene 84 protein (mug84) from Schizosaccharomyces pombe (strain 972 / ATCC 24843) (Fission yeast).